The sequence spans 366 residues: Methylthioribose-1-phosphate isomerase (366 aa).

Catalysis depends on Asp260, which acts as the Proton donor.

It belongs to the eIF-2B alpha/beta/delta subunits family. MtnA subfamily.

The protein resides in the cytoplasm. It localises to the nucleus. It catalyses the reaction 5-(methylsulfanyl)-alpha-D-ribose 1-phosphate = 5-(methylsulfanyl)-D-ribulose 1-phosphate. It participates in amino-acid biosynthesis; L-methionine biosynthesis via salvage pathway; L-methionine from S-methyl-5-thio-alpha-D-ribose 1-phosphate: step 1/6. Functionally, catalyzes the interconversion of methylthioribose-1-phosphate (MTR-1-P) into methylthioribulose-1-phosphate (MTRu-1-P). The chain is Methylthioribose-1-phosphate isomerase from Caenorhabditis briggsae.